Consider the following 240-residue polypeptide: Serine protease SplB (240 aa).

A signal peptide spans 1-36 (MNKNVVIKSLATLTILTSVTGIGTTLVEEVQQTAKA). Catalysis depends on charge relay system residues His-75, Asp-113, and Ser-193.

The protein belongs to the peptidase S1B family.

Its subcellular location is the secreted. Serine protease that cleaves specifically after the sequence Trp-Glu-Leu-Gln. The protein is Serine protease SplB (splB) of Staphylococcus aureus (strain Mu3 / ATCC 700698).